The primary structure comprises 373 residues: Tryptophan--tRNA ligase (373 aa).

Positions 79 to 87 (PSGKFHFGH) match the 'HIGH' region motif. The 'KMSKS' region motif lies at 257-261 (KMSSS).

The protein belongs to the class-I aminoacyl-tRNA synthetase family.

It is found in the cytoplasm. It catalyses the reaction tRNA(Trp) + L-tryptophan + ATP = L-tryptophyl-tRNA(Trp) + AMP + diphosphate + H(+). This chain is Tryptophan--tRNA ligase, found in Hyperthermus butylicus (strain DSM 5456 / JCM 9403 / PLM1-5).